The following is an 85-amino-acid chain: Large ribosomal subunit protein bL27 (85 aa).

Residues 1–21 (MAHKKGASSSRNGRDSNAQRL) form a disordered region. Over residues 7-19 (ASSSRNGRDSNAQ) the composition is skewed to polar residues.

This sequence belongs to the bacterial ribosomal protein bL27 family.

This is Large ribosomal subunit protein bL27 from Beutenbergia cavernae (strain ATCC BAA-8 / DSM 12333 / CCUG 43141 / JCM 11478 / NBRC 16432 / NCIMB 13614 / HKI 0122).